Here is a 1014-residue protein sequence, read N- to C-terminus: Probable sucrose-phosphate synthase 5 (1014 aa).

Basic and acidic residues-rich tracts occupy residues 29–41 and 49–58; these read RRLE…REAA and EGEKDGKPDT. Disordered regions lie at residues 29 to 108 and 648 to 677; these read RRLE…SDEE and QLLR…SSEP.

The protein belongs to the glycosyltransferase 1 family. In terms of assembly, homodimer or homotetramer. In terms of tissue distribution, expressed in germinating seeds.

It carries out the reaction beta-D-fructose 6-phosphate + UDP-alpha-D-glucose = sucrose 6(F)-phosphate + UDP + H(+). It participates in glycan biosynthesis; sucrose biosynthesis; sucrose from D-fructose 6-phosphate and UDP-alpha-D-glucose: step 1/2. With respect to regulation, activity is regulated by phosphorylation and moderated by concentration of metabolites and light. Plays a role in photosynthetic sucrose synthesis by catalyzing the rate-limiting step of sucrose biosynthesis from UDP-glucose and fructose- 6-phosphate. Involved in the regulation of carbon partitioning in the leaves of plants. May regulate the synthesis of sucrose and therefore play a major role as a limiting factor in the export of photoassimilates out of the leaf. Plays a role for sucrose availability that is essential for plant growth and fiber elongation. The sequence is that of Probable sucrose-phosphate synthase 5 (SPS5) from Oryza sativa subsp. japonica (Rice).